Here is a 525-residue protein sequence, read N- to C-terminus: Cytochrome P450 4V2 (525 aa).

Residues 13 to 33 (LLLWGAASAVSVAGATVLLNI) form a helical membrane-spanning segment. Glutamate 329 and cysteine 467 together coordinate heme.

This sequence belongs to the cytochrome P450 family. It depends on heme as a cofactor.

It is found in the endoplasmic reticulum membrane. It carries out the reaction dodecanoate + reduced [NADPH--hemoprotein reductase] + O2 = 12-hydroxydodecanoate + oxidized [NADPH--hemoprotein reductase] + H2O + H(+). It catalyses the reaction tetradecanoate + reduced [NADPH--hemoprotein reductase] + O2 = 14-hydroxytetradecanoate + oxidized [NADPH--hemoprotein reductase] + H2O + H(+). The catalysed reaction is hexadecanoate + reduced [NADPH--hemoprotein reductase] + O2 = 16-hydroxyhexadecanoate + oxidized [NADPH--hemoprotein reductase] + H2O + H(+). The enzyme catalyses (5Z,8Z,11Z,14Z,17Z)-eicosapentaenoate + reduced [NADPH--hemoprotein reductase] + O2 = 20-hydroxy-(5Z,8Z,11Z,14Z,17Z)-eicosapentaenoate + oxidized [NADPH--hemoprotein reductase] + H2O + H(+). It carries out the reaction (4Z,7Z,10Z,13Z,16Z,19Z)-docosahexaenoate + reduced [NADPH--hemoprotein reductase] + O2 = 22-hydroxy-(4Z,7Z,10Z,13Z,16Z,19Z)-docosahexaenoate + oxidized [NADPH--hemoprotein reductase] + H2O + H(+). It functions in the pathway lipid metabolism; fatty acid metabolism. Its activity is regulated as follows. Inhibited by N-hydroxy-N'-(4-n-butyl-2-methylphenyl formamidine)(HET0016) with an IC(50) of 38 nM. A cytochrome P450 monooxygenase involved in fatty acid metabolism in the eye. Catalyzes the omega-hydroxylation of polyunsaturated fatty acids (PUFAs) docosahexaenoate (DHA) and its precursor eicosapentaenoate (EPA), and may contribute to the homeostasis of these retinal PUFAs. Omega hydroxylates saturated fatty acids such as laurate, myristate and palmitate, the catalytic efficiency decreasing in the following order: myristate &gt; laurate &gt; palmitate (C14&gt;C12&gt;C16). Mechanistically, uses molecular oxygen inserting one oxygen atom into a substrate, and reducing the second into a water molecule, with two electrons provided by NADPH via cytochrome P450 reductase (CPR; NADPH-ferrihemoprotein reductase). The polypeptide is Cytochrome P450 4V2 (Cyp4v2) (Rattus norvegicus (Rat)).